Reading from the N-terminus, the 100-residue chain is Small ribosomal subunit protein bS18c (100 aa).

Residues 81–100 (KQFERTESTPRTTGPRTRKK) are disordered. The segment covering 89–100 (TPRTTGPRTRKK) has biased composition (low complexity).

This sequence belongs to the bacterial ribosomal protein bS18 family. Part of the 30S ribosomal subunit.

Its subcellular location is the plastid. The protein localises to the chloroplast. In Nandina domestica (Heavenly bamboo), this protein is Small ribosomal subunit protein bS18c.